Consider the following 443-residue polypeptide: Threonine/serine transporter TdcC (443 aa).

The next 11 helical transmembrane spans lie at 22–42 (TTWTLGLFGTAIGAGVLFFPI), 44–64 (AGFGGLIPILLMLVLAYPIAF), 97–117 (GVVITFLYFFAICPLLWIYGV), 140–160 (FVALFLLLLMAFVIWFGKDLM), 163–183 (VMSYLVWPFIASLVLISLSLI), 207–227 (ILVTVWLGISIMVFSFNFSPI), 259–279 (ASMLMVAVVMFFAFSCLFTLS), 319–339 (ASIIALVAIFKSFFGHYLGTL), 366–386 (ISMIFIMGSTWVVAYANPNIL), 389–409 (IEAMGAPIIASLLCLLPMYAI), and 423–443 (DNVFVTLIGLLTILNIVYKLF).

This sequence belongs to the amino acid/polyamine transporter 2 family. SdaC/TdcC subfamily.

Its subcellular location is the cell inner membrane. The catalysed reaction is L-threonine(in) + H(+)(in) = L-threonine(out) + H(+)(out). It carries out the reaction L-serine(in) + H(+)(in) = L-serine(out) + H(+)(out). Involved in the import of threonine and serine into the cell, with the concomitant import of a proton (symport system). The protein is Threonine/serine transporter TdcC of Salmonella paratyphi A (strain ATCC 9150 / SARB42).